A 323-amino-acid chain; its full sequence is Methionyl-tRNA formyltransferase (323 aa).

Ser115–Pro118 serves as a coordination point for (6S)-5,6,7,8-tetrahydrofolate.

The protein belongs to the Fmt family.

The enzyme catalyses L-methionyl-tRNA(fMet) + (6R)-10-formyltetrahydrofolate = N-formyl-L-methionyl-tRNA(fMet) + (6S)-5,6,7,8-tetrahydrofolate + H(+). Functionally, attaches a formyl group to the free amino group of methionyl-tRNA(fMet). The formyl group appears to play a dual role in the initiator identity of N-formylmethionyl-tRNA by promoting its recognition by IF2 and preventing the misappropriation of this tRNA by the elongation apparatus. This chain is Methionyl-tRNA formyltransferase, found in Blochmanniella floridana.